The sequence spans 339 residues: 2-keto-3-deoxygluconate permease (339 aa).

10 consecutive transmembrane segments (helical) span residues 10–30, 42–62, 77–97, 100–120, 141–161, 163–183, 199–219, 224–244, 254–274, and 289–309; these read IPGGMMLVPLFLGALCHTFAP, GLISGTVPILAVWFFCMGASI, LVVTKIAVAWVVAAVASRILP, GVEVGFFAGLSTLALVAAMDM, AFVLMSLESGPLMTMVILGTA, IASFEPHVFVGAVLPFLVGFA, VQTLIPFFAFALGNTIDLSVI, LLGVLLGISVIIITGIPLIVA, TAGIAASSSAGAAVATPVLIA, and TLVATSVIVTSVLVPIITAMW. Residues 315–339 form a disordered region; that stretch reads GGDGTVPKEDAVEEKAEQQRRRIIK. The segment covering 320–339 has biased composition (basic and acidic residues); the sequence is VPKEDAVEEKAEQQRRRIIK.

This sequence belongs to the KdgT transporter family.

The protein resides in the cell inner membrane. It carries out the reaction 2-dehydro-3-deoxy-D-gluconate(in) + H(+)(in) = 2-dehydro-3-deoxy-D-gluconate(out) + H(+)(out). With respect to regulation, uptake is inhibited by the protonophore uncouplers carbonyl cyanide m-chlorophenylhydrazone (CCCP) and 2,4-dinitrophenol, and by NaN(3). Functionally, catalyzes the proton-dependent uptake of 2-keto-3-deoxygluconate (KDG) into the cell. Can also mediate the uptake of glucuronate with a low affinity, and may mediate the uptake of 5-keto-4-deoxyuronate (DKI) and 2,5-diketo-3-deoxygluconate (DKII), which are intermediates in pectin degradation. This Dickeya chrysanthemi (Pectobacterium chrysanthemi) protein is 2-keto-3-deoxygluconate permease.